We begin with the raw amino-acid sequence, 257 residues long: Imidazole glycerol phosphate synthase subunit HisF (257 aa).

Catalysis depends on residues Asp12 and Asp131.

Belongs to the HisA/HisF family. As to quaternary structure, heterodimer of HisH and HisF.

It localises to the cytoplasm. It carries out the reaction 5-[(5-phospho-1-deoxy-D-ribulos-1-ylimino)methylamino]-1-(5-phospho-beta-D-ribosyl)imidazole-4-carboxamide + L-glutamine = D-erythro-1-(imidazol-4-yl)glycerol 3-phosphate + 5-amino-1-(5-phospho-beta-D-ribosyl)imidazole-4-carboxamide + L-glutamate + H(+). It participates in amino-acid biosynthesis; L-histidine biosynthesis; L-histidine from 5-phospho-alpha-D-ribose 1-diphosphate: step 5/9. Its function is as follows. IGPS catalyzes the conversion of PRFAR and glutamine to IGP, AICAR and glutamate. The HisF subunit catalyzes the cyclization activity that produces IGP and AICAR from PRFAR using the ammonia provided by the HisH subunit. The sequence is that of Imidazole glycerol phosphate synthase subunit HisF from Burkholderia multivorans (strain ATCC 17616 / 249).